The following is a 72-amino-acid chain: uncharacterized protein (72 aa).

The protein belongs to the baculoviridae 8 kDa protein family.

This is an uncharacterized protein from Orgyia pseudotsugata (Douglas-fir tussock moth).